A 185-amino-acid polypeptide reads, in one-letter code: Elongation factor P (185 aa).

It belongs to the elongation factor P family.

The protein resides in the cytoplasm. Its pathway is protein biosynthesis; polypeptide chain elongation. Functionally, involved in peptide bond synthesis. Stimulates efficient translation and peptide-bond synthesis on native or reconstituted 70S ribosomes in vitro. Probably functions indirectly by altering the affinity of the ribosome for aminoacyl-tRNA, thus increasing their reactivity as acceptors for peptidyl transferase. In Pelotomaculum thermopropionicum (strain DSM 13744 / JCM 10971 / SI), this protein is Elongation factor P.